The chain runs to 241 residues: Uridylate kinase (241 aa).

ATP is bound at residue 15–18 (KLSG). Positions 23–28 (GAEGFG) are involved in allosteric activation by GTP. Position 57 (glycine 57) interacts with UMP. ATP is bound by residues glycine 58 and arginine 62. UMP is bound by residues aspartate 77 and 138-145 (TGNPFFTT). 3 residues coordinate ATP: threonine 165, tyrosine 171, and aspartate 174.

The protein belongs to the UMP kinase family. Homohexamer.

The protein localises to the cytoplasm. It carries out the reaction UMP + ATP = UDP + ADP. The protein operates within pyrimidine metabolism; CTP biosynthesis via de novo pathway; UDP from UMP (UMPK route): step 1/1. Its activity is regulated as follows. Allosterically activated by GTP. Inhibited by UTP. Its function is as follows. Catalyzes the reversible phosphorylation of UMP to UDP. This Yersinia pseudotuberculosis serotype O:1b (strain IP 31758) protein is Uridylate kinase.